Reading from the N-terminus, the 304-residue chain is Non-specific ribonucleoside hydrolase RihC (304 aa).

The active site involves H233.

Belongs to the IUNH family. RihC subfamily.

Its function is as follows. Hydrolyzes both purine and pyrimidine ribonucleosides with a broad-substrate specificity. This Shigella sonnei (strain Ss046) protein is Non-specific ribonucleoside hydrolase RihC.